The sequence spans 37 residues: MKIRASVRKICEKCRLIRRRGRIMVICSNPRHKQRQG.

This sequence belongs to the bacterial ribosomal protein bL36 family.

Its subcellular location is the plastid. It is found in the chloroplast. The sequence is that of Large ribosomal subunit protein bL36c from Dioscorea elephantipes (Elephant's foot yam).